Consider the following 747-residue polypeptide: Protein FAM83C (747 aa).

The tract at residues 1-309 (MFGGPGPGVL…LYAESQPVEG (309 aa)) is DUF1669. 7 disordered regions span residues 322–352 (LRPP…SSIK), 374–412 (TGVV…LYRA), 462–484 (LSRF…GRWV), 517–550 (AREV…SPSQ), 588–633 (NQSR…LGHS), 646–672 (GEGP…DEKR), and 692–715 (ARQG…DLVR). Residues 328–350 (ALAFRPDVPSPTSSLPSSTSLSS) are compositionally biased toward low complexity. The span at 390–402 (GQPSLHRQLSDPN) shows a compositional bias: polar residues. Positions 697 to 707 (EPGGPKGGHLN) are enriched in gly residues.

This sequence belongs to the FAM83 family. May interact with RAF1. In terms of processing, phosphorylated in vitro by CSNK1A1.

The protein localises to the cytoplasm. Functionally, may play a role in MAPK signaling. The protein is Protein FAM83C of Homo sapiens (Human).